The chain runs to 2778 residues: Probable ubiquitin carboxyl-terminal hydrolase FAF (2778 aa).

The disordered stretch occupies residues 1–85; that stretch reads MTFDTRRHTT…SQSSDDVAAS (85 aa). A compositionally biased stretch (low complexity) spans 10 to 39; that stretch reads TGQPGSTAPSSSSSTTSTTTTTTSPAQSAG. Positions 71-85 are enriched in polar residues; that stretch reads QPATDSQSSDDVAAS. Ser924 carries the post-translational modification Phosphoserine. A disordered region spans residues 1065–1094; sequence GTGLASSPDSSSDSSTGSPPRPCPDMQRVE. Positions 1070 to 1082 are enriched in low complexity; that stretch reads SSPDSSSDSSTGS. The USP domain occupies 1668–2062; that stretch reads CGLKNAGATC…NAYMLFYTRC (395 aa). Cys1677 acts as the Nucleophile in catalysis. The Proton acceptor role is filled by His1986. Disordered regions lie at residues 2568–2632 and 2644–2691; these read VSEK…GDSN and AYTS…INGL. Composition is skewed to low complexity over residues 2614 to 2627 and 2644 to 2671; these read TPTTSSPSTAAWPA and AYTSTGSGSTSGGSAPTSALTTTAGSGA. Over residues 2672-2691 the composition is skewed to polar residues; the sequence is NSETESSAQETTGETTINGL.

It belongs to the peptidase C19 family. In terms of assembly, interacts with imd. Ubiquitinated. Ubiquitination is enhanced by the expression of imd. As to expression, eye disks and ovaries. Expressed in larval fat body.

The enzyme catalyses Thiol-dependent hydrolysis of ester, thioester, amide, peptide and isopeptide bonds formed by the C-terminal Gly of ubiquitin (a 76-residue protein attached to proteins as an intracellular targeting signal).. Its function is as follows. Ubiquitin C-terminal hydrolase involved in development and the imd/NF-kappa-B (IMD) signaling cascade. Required for eye and embryo development, and plays a role in compound eye assembly and oogenesis respectively. In the larval eye disks, cells outside the assembling facets require this protein for short-range cell interactions that prevent the mystery cells from becoming photoreceptors. Also required for nuclear migration and cellularization in early embryogenesis and could play a role in pole cell determination, development or function. Regulates the IMD signaling cascade at later stages of infection (around 6 hours post-infection) by inhibiting the expression of the antimicrobial peptides Dpt and Dro. Acts by modulating the state of imd polyubiquitination and/or stability; a function which appears to be independent of its enzymatic activity. In turn, imd enhances the polyubiquitination and stability of faf suggesting that they may form a regulatory feedback mechanism within the Imd pathway. In Drosophila melanogaster (Fruit fly), this protein is Probable ubiquitin carboxyl-terminal hydrolase FAF (faf).